Here is a 304-residue protein sequence, read N- to C-terminus: Thyroxine 5-deiodinase (304 aa).

Residues 1-22 (MPRQAASRLVVGEGEGPPGASG) are disordered. Topologically, residues 1–44 (MPRQAASRLVVGEGEGPPGASGPAATMLRSLLLHSLRLCAQTAS) are cytoplasmic. A helical; Signal-anchor for type II membrane protein membrane pass occupies residues 45–67 (CLVLFPRFLGTAFMLWLLDFLCI). Residues 68-304 (RKHFLRRRHP…QLHGTRPHRF (237 aa)) are Extracellular-facing. Residue U170 is part of the active site. Residue U170 is a non-standard amino acid, selenocysteine.

This sequence belongs to the iodothyronine deiodinase family. As to quaternary structure, monomer. Homodimer. May undergo minor heretodimerization with DIO1 and DIO2.

Its subcellular location is the cell membrane. It is found in the endosome membrane. It catalyses the reaction 3,3',5'-triiodo-L-thyronine + iodide + A + H(+) = L-thyroxine + AH2. The enzyme catalyses 3,3'-diiodo-L-thyronine + iodide + A + H(+) = 3,3',5-triiodo-L-thyronine + AH2. It carries out the reaction 3-iodo-L-thyronine + iodide + A + H(+) = 3,5-diiodo-L-thyronine + AH2. The catalysed reaction is L-thyronine + iodide + A + H(+) = 3-iodo-L-thyronine + AH2. It catalyses the reaction 3',5'-diiodo-L-thyronine + iodide + A + H(+) = 3,3',5'-triiodo-L-thyronine + AH2. The enzyme catalyses 3'-iodo-L-thyronine + iodide + A + H(+) = 3,3'-diiodo-L-thyronine + AH2. It carries out the reaction 3,3',5'-triiodothyronamine + iodide + A + H(+) = 3,3',5,5'-tetraiodothyronamine + AH2. The catalysed reaction is 3',5'-diiodothyronamine + iodide + A + H(+) = 3,3',5'-triiodothyronamine + AH2. It catalyses the reaction 3,3'-diiodothyronamine + iodide + A + H(+) = 3,3',5-triiodothyronamine + AH2. The enzyme catalyses 3-iodothyronamine + iodide + A + H(+) = 3,5-diiodothyronamine + AH2. It carries out the reaction 3'-iodothyronamine + iodide + A + H(+) = 3,3'-diiodothyronamine + AH2. The catalysed reaction is thyronamine + iodide + A + H(+) = 3-iodothyronamine + AH2. Plays a crucial role in the metabolism of thyroid hormones (TH) and has specific roles in TH activation and inactivation by deiodination. Catalyzes the deiodination of L-thyroxine (T4) to 3,3',5'-triiodothyronine (rT3), 3,5,3'-triiodothyronine (T3) to 3,3'-diiodothyronine (3,3'-T2), 3,5-diiodothyronine (3,5-T2) to 3-monoiodothyronine (3-T1), rT3 to 3',5'-diiodothyronine (3',5'-T2) and 3,3'-T2 to 3'-monoiodothyronine (3'-T1) via inner-ring deiodination (IRD). Catalyzes the deiodination of 3-T1 to L-thyronine (T0) via outer-ring deiodination (ORD). Catalyzes the tyrosyl ring deiodinations of 3,3',5,5'-tetraiodothyronamine, 3,3',5'-triiodothyronamine, 3,5,3'-triiodothyronamine, 3,5-diiodothyronamine, 3,3'-diiodothyronamine and 3-iodothyronamine. The chain is Thyroxine 5-deiodinase (Dio3) from Mus musculus (Mouse).